The following is a 600-amino-acid chain: Methionine--tRNA ligase (600 aa).

Positions 11–21 (PYANGPRHIGH) match the 'HIGH' region motif. Residues Cys-143, Cys-146, Cys-156, and Cys-159 each coordinate Zn(2+). The 'KMSKS' region signature appears at 351 to 355 (KFSSS). Residue Ser-354 coordinates ATP.

The protein belongs to the class-I aminoacyl-tRNA synthetase family. MetG type 1 subfamily. In terms of assembly, monomer. Zn(2+) is required as a cofactor.

The protein resides in the cytoplasm. The enzyme catalyses tRNA(Met) + L-methionine + ATP = L-methionyl-tRNA(Met) + AMP + diphosphate. Is required not only for elongation of protein synthesis but also for the initiation of all mRNA translation through initiator tRNA(fMet) aminoacylation. The chain is Methionine--tRNA ligase from Salinispora arenicola (strain CNS-205).